A 485-amino-acid chain; its full sequence is ETS translocation variant 4 (485 aa).

Lys6 participates in a covalent cross-link: Glycyl lysine isopeptide (Lys-Gly) (interchain with G-Cter in SUMO2). 2 disordered regions span residues 79 to 114 (PDFHSENSFHSPTTRIKKEPQSPRTDPALSCSRKPP) and 135 to 214 (IAIK…QHQL). A Glycyl lysine isopeptide (Lys-Gly) (interchain with G-Cter in SUMO) cross-link involves residue Lys95. Ser100 carries the phosphoserine modification. Lys138 is covalently cross-linked (Glycyl lysine isopeptide (Lys-Gly) (interchain with G-Cter in SUMO2)). 2 positions are modified to phosphoserine: Ser139 and Ser148. Low complexity predominate over residues 158 to 171 (QQQSLLRASSSSQS). Ser215 is subject to Phosphoserine. Glycyl lysine isopeptide (Lys-Gly) (interchain with G-Cter in SUMO) cross-links involve residues Lys227 and Lys261. Residue Lys323 forms a Glycyl lysine isopeptide (Lys-Gly) (interchain with G-Cter in SUMO2) linkage. Positions 342-422 (LQLWQFLVAL…AGERYVYKFV (81 aa)) form a DNA-binding region, ETS.

Belongs to the ETS family. Sumoylated; enhanced upon ERK/MAP kinase pathway activation it positively regulates the transcriptional activator capacity. Sumoylation at Lys-95 probably requires phosphorylation at Ser-100. Transiently polysumoylated and desumoylated by SENP1. Sumoylation is a prerequisite to polyubiquitination which in turn increases proteasomal-mediated degradation. Probably polyubiquitinated by RNF4 and deubiquitinated by USP2. In terms of tissue distribution, epididymis and brain.

Its subcellular location is the nucleus. Its function is as follows. Transcriptional activator. May play a role in keratinocyte differentiation. The chain is ETS translocation variant 4 (Etv4) from Mus musculus (Mouse).